Here is a 359-residue protein sequence, read N- to C-terminus: MPSKLAISSMSLGRCFAGHSLDSKLDAAQRYGYLGIELFYEDLVDVAEHLSNERPSPEGPFVEAQIAAARHILQMCQARGLEVVCLQPFMHYDGLNDRAEHERRLEKLALWIELAHELHTDIIQIPANFLPANQVSDNLDLIVSDLCKVADIGAQALPPIRFAYESLCWSTRVDLWERCWDIVQRVDRPNFGICLDTFNILGRIYADPTSPSGRTPNAKEAVRKSIANLVSRVDVSKVFYVQVVDAERLSKPLLPGHPYYNPEQPARMSWSRNCRLFYGETEYGAYLPVKEVARALFHGIGFEGWVSLELFNRRMSEEGPEVPEELAMRGAISWAKLVQDLRIPVEGPLVTMPRVSASL.

It belongs to the bacterial two-domain DSD family. As to quaternary structure, monomer.

It catalyses the reaction 3-dehydroshikimate = 3,4-dihydroxybenzoate + H2O. It functions in the pathway aromatic compound metabolism; 3,4-dihydroxybenzoate biosynthesis; 3,4-dihydroxybenzoate from 3-dehydroquinate: step 2/2. Its activity is regulated as follows. Divalent cations such as Mg(2+), but also MO(2+), Mn(2+), Ba(2+), and Co(2+) activate the enzyme, whereas monovalent cations as K(+), Na(+), and NH4(+) decrease its activity slightly. 3-dehydroshikimate dehydratase; part of the qa gene cluster that mediates the catabolism of quinic acid (QA) and as such, allows the use of QA as a sole carbon source. Catalyzes the third reaction in the inducible quinic acid catabolic pathway by converting dehydroshikimate to protocatechuate. The qa cluster encodes 3 inducible enymes (qa-2, qa-3 and qa-4) catalyzing the first three reactions in the catabolism of quinic acid to protocatechuic acid (also known as 3,4-Dihydroxybenzoic acid). This chain is 3-dehydroshikimate dehydratase, found in Neurospora crassa (strain ATCC 24698 / 74-OR23-1A / CBS 708.71 / DSM 1257 / FGSC 987).